Here is a 348-residue protein sequence, read N- to C-terminus: Alcohol dehydrogenase 1 (348 aa).

The Zn(2+) site is built by C44, H67, C98, C101, C104, C112, and C154. Residues 178 to 184 (GAGGGLG), D202, K207, 269 to 271 (VGL), and R341 each bind NAD(+).

It belongs to the zinc-containing alcohol dehydrogenase family. Homotetramer. Zn(2+) serves as cofactor.

It localises to the cytoplasm. The catalysed reaction is a primary alcohol + NAD(+) = an aldehyde + NADH + H(+). It carries out the reaction a secondary alcohol + NAD(+) = a ketone + NADH + H(+). Its function is as follows. Converts ethanol to acetaldehyde and plays a major role in xylose fermentation. The sequence is that of Alcohol dehydrogenase 1 (ADH1) from Scheffersomyces stipitis (strain ATCC 58785 / CBS 6054 / NBRC 10063 / NRRL Y-11545) (Yeast).